Here is a 274-residue protein sequence, read N- to C-terminus: Triosephosphate isomerase (274 aa).

31-33 (NWK) lines the substrate pocket. The active-site Electrophile is the H118. E188 acts as the Proton acceptor in catalysis. Residues G194, S234, and 255-256 (GG) each bind substrate.

It belongs to the triosephosphate isomerase family. In terms of assembly, homodimer.

It localises to the cytoplasm. The catalysed reaction is D-glyceraldehyde 3-phosphate = dihydroxyacetone phosphate. The protein operates within carbohydrate biosynthesis; gluconeogenesis. It functions in the pathway carbohydrate degradation; glycolysis; D-glyceraldehyde 3-phosphate from glycerone phosphate: step 1/1. Involved in the gluconeogenesis. Catalyzes stereospecifically the conversion of dihydroxyacetone phosphate (DHAP) to D-glyceraldehyde-3-phosphate (G3P). In Chlamydia trachomatis serovar L2 (strain ATCC VR-902B / DSM 19102 / 434/Bu), this protein is Triosephosphate isomerase.